The sequence spans 498 residues: Sulfate adenylyltransferase subunit 1 (498 aa).

The tr-type G domain occupies threonine 30–glutamine 246. The segment at glycine 39 to serine 46 is G1. Residue glycine 39 to serine 46 participates in GTP binding. Positions glycine 97–aspartate 101 are G2. A G3 region spans residues aspartate 118–glycine 121. Residues aspartate 118–histidine 122 and asparagine 173–aspartate 176 each bind GTP. The G4 stretch occupies residues asparagine 173–aspartate 176. A G5 region spans residues serine 210 to leucine 212.

This sequence belongs to the TRAFAC class translation factor GTPase superfamily. Classic translation factor GTPase family. CysN/NodQ subfamily. In terms of assembly, heterodimer composed of CysD, the smaller subunit, and CysN.

The enzyme catalyses sulfate + ATP + H(+) = adenosine 5'-phosphosulfate + diphosphate. Its pathway is sulfur metabolism; hydrogen sulfide biosynthesis; sulfite from sulfate: step 1/3. Its function is as follows. With CysD forms the ATP sulfurylase (ATPS) that catalyzes the adenylation of sulfate producing adenosine 5'-phosphosulfate (APS) and diphosphate, the first enzymatic step in sulfur assimilation pathway. APS synthesis involves the formation of a high-energy phosphoric-sulfuric acid anhydride bond driven by GTP hydrolysis by CysN coupled to ATP hydrolysis by CysD. This is Sulfate adenylyltransferase subunit 1 from Rhizobium meliloti (strain 1021) (Ensifer meliloti).